A 255-amino-acid chain; its full sequence is Flap endonuclease Xni (255 aa).

Asp-105 is a binding site for Mg(2+). The region spanning 163 to 253 (QYQMLDFIAL…NLKQFRINPI (91 aa)) is the 5'-3' exonuclease domain. Residues Leu-172, Ala-173, Pro-181, Ile-183, and Ile-186 each contribute to the K(+) site. The interaction with DNA stretch occupies residues 185–190 (GIGPKS).

This sequence belongs to the Xni family. The cofactor is Mg(2+). K(+) is required as a cofactor.

Its function is as follows. Has flap endonuclease activity. During DNA replication, flap endonucleases cleave the 5'-overhanging flap structure that is generated by displacement synthesis when DNA polymerase encounters the 5'-end of a downstream Okazaki fragment. The sequence is that of Flap endonuclease Xni from Shewanella frigidimarina (strain NCIMB 400).